Reading from the N-terminus, the 1009-residue chain is Rho GTPase-activating protein gacT (1009 aa).

2 disordered regions span residues 1-72 and 89-117; these read MKNI…SRNH and TSHH…QQTQ. Residues 12–23 show a composition bias toward basic and acidic residues; sequence FHKDKKEGDKQD. Residues 26–35 are compositionally biased toward low complexity; the sequence is GSSGSSGNSG. A compositionally biased stretch (polar residues) spans 58–69; that stretch reads ESYSGDNSPTLS. Residues 89–103 show a composition bias toward basic residues; that stretch reads TSHHSHSHNHNHNHN. The span at 104–117 shows a compositional bias: low complexity; the sequence is HQLTQPIQQQQQTQ. The Rho-GAP domain maps to 163-351; it reads VPLTQVPCRA…EVFPQHHLYY (189 aa). 3 disordered regions span residues 388-420, 432-482, and 508-571; these read TISG…DSTA, PEQQ…TFRV, and GPSG…TTDQ. Low complexity-rich tracts occupy residues 394-415, 432-468, and 512-521; these read PSNG…ITSP, PEQQ…QPIS, and TTGTTPNGGS. The span at 522–546 shows a compositional bias: gly residues; sequence LSIGGGNGGNGGSSLSVGSGGGNGG. Residues 547–557 show a composition bias toward low complexity; it reads SSLSVGSNTSV. Residues 580–656 adopt a coiled-coil conformation; that stretch reads AYTNNEDTKA…IEREIEKKRL (77 aa). The tract at residues 686–713 is disordered; the sequence is ISTIDGSGGSNRNSKNYGNGSSSSSNRR. Residues 695–713 are compositionally biased toward low complexity; it reads SNRNSKNYGNGSSSSSNRR. Positions 715–743 form a coiled coil; sequence SNTINQQLQMQLQQLQIQQQQYQQTQQSQ. The disordered stretch occupies residues 759–781; sequence TTTTTTTSSGSNRFSSNRYKPVD. Residues 766–781 are compositionally biased toward polar residues; sequence SSGSNRFSSNRYKPVD. A coiled-coil region spans residues 839 to 952; the sequence is ENLVLLQQQY…IEEIHLLETY (114 aa). Positions 965–1009 are disordered; that stretch reads STTKDLLTRSRSPTLPSSINMSTSSLGSSSSSAYNNNNNNNNVPK. Over residues 967–980 the composition is skewed to polar residues; the sequence is TKDLLTRSRSPTLP. Positions 981–1009 are enriched in low complexity; the sequence is SSINMSTSSLGSSSSSAYNNNNNNNNVPK.

Its subcellular location is the cytoplasm. In terms of biological role, rho GTPase-activating protein involved in the signal transduction pathway. The sequence is that of Rho GTPase-activating protein gacT (gacT) from Dictyostelium discoideum (Social amoeba).